The primary structure comprises 302 residues: Ubiquitin thioesterase OTU1 (302 aa).

Positions 5 to 83 (RCKARSGTQP…IVEEDTSKPS (79 aa)) are UBX-like. The OTU domain occupies 103–228 (LARRVVPADN…GIHYDPLERK (126 aa)). The cys-loop stretch occupies residues 108-114 (VPADNSC). The active site involves Asp111. Cys114 (nucleophile) is an active-site residue. The tract at residues 167 to 177 (IRREETWGGAI) is variable-loop. Residues 217–221 (YDGIH) form a his-loop region. A substrate-binding site is contributed by Ile220. The active site involves His221. Residues 245-250 (DVVLAQ) form an S2 site region. The C2H2-type zinc finger occupies 272-296 (LRCMVCQKGLTGQVEAREHAKETGH). His296 is a catalytic residue.

The protein resides in the cytoplasm. The catalysed reaction is Thiol-dependent hydrolysis of ester, thioester, amide, peptide and isopeptide bonds formed by the C-terminal Gly of ubiquitin (a 76-residue protein attached to proteins as an intracellular targeting signal).. Hydrolase that can remove conjugated ubiquitin from proteins and participates in endoplasmic reticulum-associated degradation (ERAD) for misfolded lumenal proteins. May act by triming the ubiquitin chain on the associated substrate to facilitate their threading through the VCP/p97 pore. Ubiquitin moieties on substrates may present a steric impediment to the threading process when the substrate is transferred to the VCP pore and threaded through VCP's axial channel. Mediates deubiquitination of 'Lys-27'-, 'Lys-29'- and 'Lys-33'-linked polyubiquitin chains. Also able to hydrolyze 'Lys-11'-linked ubiquitin chains. Cleaves both polyubiquitin and di-ubiquitin. The polypeptide is Ubiquitin thioesterase OTU1 (YOD1) (Gallus gallus (Chicken)).